We begin with the raw amino-acid sequence, 797 residues long: Homoaconitase, mitochondrial (797 aa).

The N-terminal 47 residues, 1–47, are a transit peptide targeting the mitochondrion; sequence MVARFVPSAMTVLVARRGLAMASTRRGWRGLAVNLKPAAGRQWRQAY. Residues C404, C471, and C474 each contribute to the [4Fe-4S] cluster site.

Belongs to the aconitase/IPM isomerase family. It depends on [4Fe-4S] cluster as a cofactor.

Its subcellular location is the mitochondrion. It catalyses the reaction (2R,3S)-homoisocitrate = cis-homoaconitate + H2O. It participates in amino-acid biosynthesis; L-lysine biosynthesis via AAA pathway; L-alpha-aminoadipate from 2-oxoglutarate: step 3/5. In terms of biological role, catalyzes the reversible hydration of cis-homoaconitate to (2R,3S)-homoisocitrate, a step in the alpha-aminoadipate pathway for lysine biosynthesis. The chain is Homoaconitase, mitochondrial (LYS4) from Chaetomium globosum (strain ATCC 6205 / CBS 148.51 / DSM 1962 / NBRC 6347 / NRRL 1970) (Soil fungus).